A 134-amino-acid polypeptide reads, in one-letter code: D-ribose pyranase (134 aa).

The Proton donor role is filled by histidine 20. Substrate is bound by residues aspartate 28, histidine 99, and 123 to 125 (YSN).

The protein belongs to the RbsD / FucU family. RbsD subfamily. In terms of assembly, homodecamer.

The protein localises to the cytoplasm. The catalysed reaction is beta-D-ribopyranose = beta-D-ribofuranose. Its pathway is carbohydrate metabolism; D-ribose degradation; D-ribose 5-phosphate from beta-D-ribopyranose: step 1/2. Its function is as follows. Catalyzes the interconversion of beta-pyran and beta-furan forms of D-ribose. The chain is D-ribose pyranase from Staphylococcus aureus (strain USA300).